Reading from the N-terminus, the 122-residue chain is Large ribosomal subunit protein uL14 (122 aa).

It belongs to the universal ribosomal protein uL14 family. Part of the 50S ribosomal subunit. Forms a cluster with proteins L3 and L19. In the 70S ribosome, L14 and L19 interact and together make contacts with the 16S rRNA in bridges B5 and B8.

Functionally, binds to 23S rRNA. Forms part of two intersubunit bridges in the 70S ribosome. This Thioalkalivibrio sulfidiphilus (strain HL-EbGR7) protein is Large ribosomal subunit protein uL14.